Here is a 100-residue protein sequence, read N- to C-terminus: MSDKTLTRMDLSEAVFREVGLSRNESAQLVESVLQHVSDALASGETVKISSFGTFTVRDKSARIGRNPKTGDEVPISPRRVLTFRPSHLMKERVAAGGKN.

Belongs to the bacterial histone-like protein family. Heterodimer of an alpha and a beta chain.

This protein is one of the two subunits of integration host factor, a specific DNA-binding protein that functions in genetic recombination as well as in transcriptional and translational control. This is Integration host factor subunit alpha from Cereibacter sphaeroides (strain ATCC 17023 / DSM 158 / JCM 6121 / CCUG 31486 / LMG 2827 / NBRC 12203 / NCIMB 8253 / ATH 2.4.1.) (Rhodobacter sphaeroides).